Consider the following 532-residue polypeptide: MAKFIFVTGGVVSGLGKGITASSIGALLKASGLKVFMQKFDPYLNVDPGTMSPYQHGEVFVTKDGGETDLDLGHYERFIDEELTKLSSTTSGKIYLSVIQGERKGVNSGKTIQVVPHITDAIKQKVYQAAKQSQADVIISEIGGTVGDIESQPFIEAIRQIRLEQGKENVMFVHVVLLLWLAASKEYKTKPIQNSVKAMASLGIQPDVIVCRSDSSSPKDIKEKISLFCNVPITNIIDAIDQDSIYRVPLALAKQNLQDIIIEQLQLKAKNIDLSLWKQFNKKIDSSTEEIEISFVGKYIELQDAYLSVLESLKIAGWEFNKKIKIRWVQADKLDESNYKEVLKNSQGILVPGGFGKRGIEGMMLASRYARENDIPYLGICLGMQIATISIARDLLNWSDADSTEFNKNTTHPIFDYIKGIDRDNIGGTLRLGTMVTKLEKNSLVSKLYNSDIALERHRHRYEFNNEYKKDLESVGLRFSGIYEEKNIVEVVEMPSLKFFVASQFHPEFTSRPNKPTPLFKGFIKAIVENNK.

An amidoligase domain region spans residues 1–267 (MAKFIFVTGG…QDIIIEQLQL (267 aa)). Ser-13 contacts CTP. Ser-13 contacts UTP. ATP is bound at residue 14–19 (GLGKGI). Residue Tyr-54 participates in L-glutamine binding. Asp-71 is an ATP binding site. Mg(2+) contacts are provided by Asp-71 and Glu-141. CTP-binding positions include 148-150 (DIE), 188-193 (KTKPIQ), and Lys-224. UTP is bound by residues 188–193 (KTKPIQ) and Lys-224. A Glutamine amidotransferase type-1 domain is found at 292 to 532 (EISFVGKYIE…FIKAIVENNK (241 aa)). L-glutamine is bound at residue Gly-354. Cys-381 acts as the Nucleophile; for glutamine hydrolysis in catalysis. L-glutamine contacts are provided by residues 382-385 (LGMQ), Glu-405, and Arg-461. Residues His-506 and Glu-508 contribute to the active site.

The protein belongs to the CTP synthase family. As to quaternary structure, homotetramer.

The catalysed reaction is UTP + L-glutamine + ATP + H2O = CTP + L-glutamate + ADP + phosphate + 2 H(+). The enzyme catalyses L-glutamine + H2O = L-glutamate + NH4(+). It carries out the reaction UTP + NH4(+) + ATP = CTP + ADP + phosphate + 2 H(+). Its pathway is pyrimidine metabolism; CTP biosynthesis via de novo pathway; CTP from UDP: step 2/2. With respect to regulation, allosterically activated by GTP, when glutamine is the substrate; GTP has no effect on the reaction when ammonia is the substrate. The allosteric effector GTP functions by stabilizing the protein conformation that binds the tetrahedral intermediate(s) formed during glutamine hydrolysis. Inhibited by the product CTP, via allosteric rather than competitive inhibition. In terms of biological role, catalyzes the ATP-dependent amination of UTP to CTP with either L-glutamine or ammonia as the source of nitrogen. Regulates intracellular CTP levels through interactions with the four ribonucleotide triphosphates. This is CTP synthase from Mycoplasma mycoides subsp. mycoides SC (strain CCUG 32753 / NCTC 10114 / PG1).